Consider the following 501-residue polypeptide: ATP synthase subunit alpha (501 aa).

Residue 169-176 (GDRQTGKT) participates in ATP binding.

The protein belongs to the ATPase alpha/beta chains family. In terms of assembly, F-type ATPases have 2 components, CF(1) - the catalytic core - and CF(0) - the membrane proton channel. CF(1) has five subunits: alpha(3), beta(3), gamma(1), delta(1), epsilon(1). CF(0) has three main subunits: a(1), b(2) and c(9-12). The alpha and beta chains form an alternating ring which encloses part of the gamma chain. CF(1) is attached to CF(0) by a central stalk formed by the gamma and epsilon chains, while a peripheral stalk is formed by the delta and b chains.

Its subcellular location is the cell membrane. It carries out the reaction ATP + H2O + 4 H(+)(in) = ADP + phosphate + 5 H(+)(out). Its function is as follows. Produces ATP from ADP in the presence of a proton gradient across the membrane. The alpha chain is a regulatory subunit. This Streptococcus mutans serotype c (strain ATCC 700610 / UA159) protein is ATP synthase subunit alpha.